The sequence spans 291 residues: Short-chain dehydrogenase/reductase GME11359 (291 aa).

Residues leucine 18, aspartate 67, asparagine 96, tyrosine 177, lysine 181, and valine 209 each contribute to the NADP(+) site. Catalysis depends on tyrosine 177, which acts as the Proton acceptor. The active-site Lowers pKa of active site Tyr is the lysine 181.

Belongs to the short-chain dehydrogenases/reductases (SDR) family.

Its pathway is secondary metabolite biosynthesis. In terms of biological role, short-chain dehydrogenase/reductase; part of the gene cluster that mediates the biosynthesis of dibenzodioxocinones such as pestalotiollide B, a novel class of inhibitors against cholesterol ester transfer protein (CEPT). The biosynthesis initiates from condensation of acetate and malonate units catalyzed by the non-reducing PKS pks8/GME11356. Pks8/GME11356 lacks a thioesterase (TE) domain, which is important to the cyclizing of the third ring of atrochrysone carboxylic acid, and the esterase GME11355 might play the role of TE and catalyzes the cyclization reaction of the C ring. The lactamase-like protein GME11357 (or other beta-lactamases in Pestalotiopsis microspora) probably hydrolyzes the thioester bond between the ACP of pks8/GME11356 and the intermediate to release atrochrysone carboxylic acid, which is spontaneously dehydrates to form endocrocin anthrone. Endocrocin anthrone is further converted to emodin via the endocrocin intermediate. Emodin is then oxidized by several enzymes such as the Baeyer-Villiger oxidase GME11358, the oxidoreductase GME11367, the short chain dehydrogenase/reductase GME11373, as well as by other oxidoreductases from the cluster, to modify the A and C rings and open the B ring, and finally yield monodictyphenone. The prenyltransferase GME11375 may catalyze the addition reaction between the C5 side chains and the carbon bone of dibenzodioxocinones. The remaining biochemical reactions to the final product dibenzodioxocinones should be methylation catalyzed by methyltransferase GME11366 and reduction and lactonization reaction catalyzed by a series of oxidordeuctases. This Pestalotiopsis microspora protein is Short-chain dehydrogenase/reductase GME11359.